Reading from the N-terminus, the 565-residue chain is Urocanate hydratase (565 aa).

Residues G61–G62, Q139, G185–G187, E205, R210, N251–A252, Q272–H276, Y282–L283, and Y331 each bind NAD(+). Residue C419 is part of the active site. Positions L453 to S472 are disordered. Positions R463–S472 are enriched in basic and acidic residues. Residue G501 coordinates NAD(+).

Belongs to the urocanase family. Requires NAD(+) as cofactor.

The protein resides in the cytoplasm. The catalysed reaction is 4-imidazolone-5-propanoate = trans-urocanate + H2O. The protein operates within amino-acid degradation; L-histidine degradation into L-glutamate; N-formimidoyl-L-glutamate from L-histidine: step 2/3. Its function is as follows. Catalyzes the conversion of urocanate to 4-imidazolone-5-propionate. The polypeptide is Urocanate hydratase (Pseudomonas savastanoi pv. phaseolicola (strain 1448A / Race 6) (Pseudomonas syringae pv. phaseolicola (strain 1448A / Race 6))).